Here is a 328-residue protein sequence, read N- to C-terminus: DNA-directed RNA polymerase subunit alpha (328 aa).

Residues 1-231 (MQTNLLKPKA…EQLAVFAQLE (231 aa)) form an alpha N-terminal domain (alpha-NTD) region. Residues 248 to 328 (FDPILLRPVD…NWPPQGLDKR (81 aa)) form an alpha C-terminal domain (alpha-CTD) region.

Belongs to the RNA polymerase alpha chain family. In terms of assembly, homodimer. The RNAP catalytic core consists of 2 alpha, 1 beta, 1 beta' and 1 omega subunit. When a sigma factor is associated with the core the holoenzyme is formed, which can initiate transcription.

The catalysed reaction is RNA(n) + a ribonucleoside 5'-triphosphate = RNA(n+1) + diphosphate. Its function is as follows. DNA-dependent RNA polymerase catalyzes the transcription of DNA into RNA using the four ribonucleoside triphosphates as substrates. The chain is DNA-directed RNA polymerase subunit alpha from Leptothrix cholodnii (strain ATCC 51168 / LMG 8142 / SP-6) (Leptothrix discophora (strain SP-6)).